Consider the following 31-residue polypeptide: Cytochrome b6-f complex subunit 6 (31 aa).

The chain crosses the membrane as a helical span at residues leucine 3–leucine 23.

This sequence belongs to the PetL family. The 4 large subunits of the cytochrome b6-f complex are cytochrome b6, subunit IV (17 kDa polypeptide, PetD), cytochrome f and the Rieske protein, while the 4 small subunits are PetG, PetL, PetM and PetN. The complex functions as a dimer.

The protein localises to the plastid. Its subcellular location is the chloroplast thylakoid membrane. Component of the cytochrome b6-f complex, which mediates electron transfer between photosystem II (PSII) and photosystem I (PSI), cyclic electron flow around PSI, and state transitions. PetL is important for photoautotrophic growth as well as for electron transfer efficiency and stability of the cytochrome b6-f complex. This chain is Cytochrome b6-f complex subunit 6, found in Porphyra purpurea (Red seaweed).